A 470-amino-acid chain; its full sequence is Putative multidrug resistance protein MdtD (470 aa).

Topologically, residues methionine 1–glutamine 11 are periplasmic. Residues leucine 12–alanine 32 traverse the membrane as a helical segment. The Cytoplasmic segment spans residues leucine 33 to histidine 48. The chain crosses the membrane as a helical span at residues methionine 49–alanine 69. At aspartate 70–asparagine 76 the chain is on the periplasmic side. Residues isoleucine 77 to threonine 97 form a helical membrane-spanning segment. The Cytoplasmic segment spans residues leucine 98–leucine 101. A helical transmembrane segment spans residues valine 102–methionine 124. Residues lysine 125 to threonine 137 lie on the Periplasmic side of the membrane. Residues phenylalanine 138–valine 158 form a helical membrane-spanning segment. The Cytoplasmic portion of the chain corresponds to glutamate 159–histidine 164. A helical transmembrane segment spans residues tryptophan 165–methionine 185. Topologically, residues proline 186–aspartate 196 are periplasmic. A helical membrane pass occupies residues leucine 197 to serine 217. At lysine 218–glycine 221 the chain is on the cytoplasmic side. A helical membrane pass occupies residues isoleucine 222–leucine 242. At leucine 243 to threonine 262 the chain is on the periplasmic side. A helical transmembrane segment spans residues phenylalanine 263–methionine 283. Topologically, residues threonine 284–proline 285 are cytoplasmic. Residues valine 286–methionine 306 form a helical membrane-spanning segment. Residues valine 307–serine 341 lie on the Periplasmic side of the membrane. The chain crosses the membrane as a helical span at residues leucine 342–leucine 362. Residues glutamine 363–serine 395 lie on the Cytoplasmic side of the membrane. Residues methionine 396 to phenylalanine 416 traverse the membrane as a helical segment. At glycine 417–histidine 430 the chain is on the periplasmic side. A helical membrane pass occupies residues valine 431–alanine 451. The Cytoplasmic segment spans residues arginine 452–leucine 470.

The protein belongs to the major facilitator superfamily. TCR/Tet family.

The protein resides in the cell inner membrane. This chain is Putative multidrug resistance protein MdtD, found in Salmonella paratyphi B (strain ATCC BAA-1250 / SPB7).